The primary structure comprises 1862 residues: Protein RRP5 homolog (1862 aa).

Positions 1 to 56 (MANLEESFPRGGTRKLHKSEKSSQQVVEQDNLFDVSTEEGPIKRKKSQKGPAKTKK) are disordered. At Ala2 the chain carries N-acetylalanine. A Phosphoserine modification is found at Ser7. The segment covering 43-56 (KRKKSQKGPAKTKK) has biased composition (basic residues). 4 S1 motif domains span residues 83–171 (GMRI…LSVN), 187–258 (GMLL…LSVE), 281–346 (GLLV…LSLR), and 365–436 (GAVL…LSLR). Phosphoserine is present on Ser438. S1 motif domains lie at 453–522 (GTVV…MTLK), 542–611 (GLQT…LSFR), 636–707 (GQLV…LCRK), 729–798 (GMLL…LSLR), and 846–911 (GMVL…VSLH). The tract at residues 999–1036 (SKRTRMPVQRDSETVDDKGEEKEEEEEEEEKEEENLTV) is disordered. Basic and acidic residues predominate over residues 1006–1019 (VQRDSETVDDKGEE). The span at 1020-1033 (KEEEEEEEEKEEEN) shows a compositional bias: acidic residues. S1 motif domains lie at 1047–1120 (GDKV…ISHP), 1160–1233 (GQTV…LSLI), 1241–1309 (GEVA…LSLR), and 1335–1407 (GQLL…LSLL). Disordered stretches follow at residues 1406–1520 (LLPS…STEV) and 1545–1577 (REES…KAEK). 2 stretches are compositionally biased toward basic and acidic residues: residues 1423-1437 (PKQE…EGQK) and 1445-1454 (RREEKEEPQK). Lys1424 is covalently cross-linked (Glycyl lysine isopeptide (Lys-Gly) (interchain with G-Cter in SUMO2)). Ser1468 and Ser1490 each carry phosphoserine. Basic and acidic residues predominate over residues 1566–1577 (KERELEKQKAEK). 4 HAT repeats span residues 1590 to 1622 (GRQP…FHLQ), 1696 to 1728 (EKYK…FVLG), 1766 to 1798 (GDVE…MTIK), and 1800 to 1835 (GSQT…YEKQ).

Interacts with NF-kappa-B p50/NFKB1 and NF-kappa-B p65/RELA. Ubiquitous.

The protein resides in the nucleus. It is found in the nucleolus. In terms of biological role, essential for the generation of mature 18S rRNA, specifically necessary for cleavages at sites A0, 1 and 2 of the 47S precursor. Directly interacts with U3 snoRNA. This chain is Protein RRP5 homolog (Pdcd11), found in Mus musculus (Mouse).